The chain runs to 117 residues: G antigen 13 (117 aa).

A disordered region spans residues 1–117; sequence MSWRGRSTYY…PEEGEKQSQC (117 aa). Acidic residues-rich tracts occupy residues 32–45 and 87–96; these read FSDE…EEGE and ECEDGPDGQE. Over residues 103–117 the composition is skewed to basic and acidic residues; sequence EEVKTPEEGEKQSQC.

The protein belongs to the GAGE family.

The protein is G antigen 13 of Homo sapiens (Human).